Consider the following 211-residue polypeptide: Thiamine-phosphate synthase (211 aa).

Residues 37–41 (QLRIK) and asparagine 69 each bind 4-amino-2-methyl-5-(diphosphooxymethyl)pyrimidine. Aspartate 70 and aspartate 89 together coordinate Mg(2+). Serine 108 lines the 4-amino-2-methyl-5-(diphosphooxymethyl)pyrimidine pocket. 134-136 (TQT) lines the 2-[(2R,5Z)-2-carboxy-4-methylthiazol-5(2H)-ylidene]ethyl phosphate pocket. Lysine 137 serves as a coordination point for 4-amino-2-methyl-5-(diphosphooxymethyl)pyrimidine. 2-[(2R,5Z)-2-carboxy-4-methylthiazol-5(2H)-ylidene]ethyl phosphate-binding positions include glycine 166 and 186 to 187 (VS).

This sequence belongs to the thiamine-phosphate synthase family. It depends on Mg(2+) as a cofactor.

The enzyme catalyses 2-[(2R,5Z)-2-carboxy-4-methylthiazol-5(2H)-ylidene]ethyl phosphate + 4-amino-2-methyl-5-(diphosphooxymethyl)pyrimidine + 2 H(+) = thiamine phosphate + CO2 + diphosphate. The catalysed reaction is 2-(2-carboxy-4-methylthiazol-5-yl)ethyl phosphate + 4-amino-2-methyl-5-(diphosphooxymethyl)pyrimidine + 2 H(+) = thiamine phosphate + CO2 + diphosphate. It catalyses the reaction 4-methyl-5-(2-phosphooxyethyl)-thiazole + 4-amino-2-methyl-5-(diphosphooxymethyl)pyrimidine + H(+) = thiamine phosphate + diphosphate. The protein operates within cofactor biosynthesis; thiamine diphosphate biosynthesis; thiamine phosphate from 4-amino-2-methyl-5-diphosphomethylpyrimidine and 4-methyl-5-(2-phosphoethyl)-thiazole: step 1/1. Its function is as follows. Condenses 4-methyl-5-(beta-hydroxyethyl)thiazole monophosphate (THZ-P) and 2-methyl-4-amino-5-hydroxymethyl pyrimidine pyrophosphate (HMP-PP) to form thiamine monophosphate (TMP). The polypeptide is Thiamine-phosphate synthase (Escherichia coli (strain SE11)).